A 247-amino-acid polypeptide reads, in one-letter code: 3-deoxy-manno-octulosonate cytidylyltransferase (247 aa).

This sequence belongs to the KdsB family.

It localises to the cytoplasm. The catalysed reaction is 3-deoxy-alpha-D-manno-oct-2-ulosonate + CTP = CMP-3-deoxy-beta-D-manno-octulosonate + diphosphate. It functions in the pathway nucleotide-sugar biosynthesis; CMP-3-deoxy-D-manno-octulosonate biosynthesis; CMP-3-deoxy-D-manno-octulosonate from 3-deoxy-D-manno-octulosonate and CTP: step 1/1. It participates in bacterial outer membrane biogenesis; lipopolysaccharide biosynthesis. In terms of biological role, activates KDO (a required 8-carbon sugar) for incorporation into bacterial lipopolysaccharide in Gram-negative bacteria. The sequence is that of 3-deoxy-manno-octulosonate cytidylyltransferase from Methylobacterium nodulans (strain LMG 21967 / CNCM I-2342 / ORS 2060).